The primary structure comprises 915 residues: Protein ZDS1 (915 aa).

6 disordered regions span residues 1–28 (MSNR…KRKS), 69–134 (GESS…KKGV), 179–261 (LSDN…SETV), 310–330 (GSYS…EGDI), 412–433 (KSPF…SIGD), and 464–807 (KVRN…SILP). Residues 74 to 93 (RRSWSGTTSSSASMPSDTTT) are compositionally biased toward low complexity. The segment covering 115-125 (GIESSNKTKQG) has biased composition (polar residues). Residues 202–212 (DKESQSYENKE) show a composition bias toward basic and acidic residues. Phosphoserine is present on Ser229. Acidic residues predominate over residues 243-252 (EFDDNEDDDN). Basic and acidic residues predominate over residues 313–327 (SDKKDQPQPEGHYDE). Positions 464-480 (KVRNDTVEQDLELREGT) are enriched in basic and acidic residues. The span at 515–530 (DDNEENQGDDENEENV) shows a compositional bias: acidic residues. 2 stretches are compositionally biased toward basic and acidic residues: residues 531–541 (DSQRMELDNSK) and 552–562 (EKTEVSNKEEM). 2 stretches are compositionally biased toward low complexity: residues 565-574 (SSTSTATSQT) and 597-609 (SSSP…SSPS). 2 stretches are compositionally biased toward basic residues: residues 618-627 (VRVRKSKKLG) and 642-656 (NRPR…RHGS). Positions 668–679 (QPQQQIPLQPQL) are enriched in low complexity. Residues 696–710 (LPQLQPAVSVSSTKS) show a composition bias toward polar residues. Basic and acidic residues-rich tracts occupy residues 711–721 (NSRDREEEEAK) and 742–751 (VQKENTDEQK). Residues 752 to 793 (AQLQAPAQEQVQTSVPVQASAPVQNSAPVQTSAPVEASAQTQ) show a composition bias toward polar residues.

The protein to yeast ZDS2/MCS1. In terms of assembly, interacts with BCY1, DBP5, GFD1 and SKG6.

Its subcellular location is the cytoplasm. Functionally, has a role in establishing cell polarity. Together with cAMP-dependent protein kinase regulatory subunit BCY1, provides a negative feedback control on the cell wall integrity-signaling pathway by acting as a negative regulator of MAP kinase SLT2/MPK1. In heat-stressed cells appears to play a role in localizing BCY1 to the cytoplasm. Seems to interact with, and down-regulate, CDC42. Also acts as a suppressor of PKC1. May act as an integration point for distinct signaling pathways helping to maintain a balance among these different pathways. In terms of biological role, when associated with DBP5, GFD1 and nucleoporins at the cytosolic fibrils of the nuclear pore complex, is required for mRNA export form the nucleus. This chain is Protein ZDS1 (ZDS1), found in Saccharomyces cerevisiae (strain ATCC 204508 / S288c) (Baker's yeast).